The primary structure comprises 1548 residues: Dicer-like protein 1 (1548 aa).

The span at 1–41 shows a compositional bias: basic and acidic residues; that stretch reads MGDPAAHEMADLERGFSSEDDAEYRSGDDEASKFVENEPSK. The disordered stretch occupies residues 1–48; it reads MGDPAAHEMADLERGFSSEDDAEYRSGDDEASKFVENEPSKRGKISQK. Residues 106–289 form the Helicase ATP-binding domain; the sequence is LFERAKQQNT…QAAIELEGLL (184 aa). 119-126 contacts ATP; sequence LDTGSGKT. Positions 232–235 match the DEAH box motif; the sequence is DEAH. A Helicase C-terminal domain is found at 428–589; it reads TLSKLLEEYF…FCNTQPEDRL (162 aa). Residues 624 to 718 form the Dicer dsRNA-binding fold domain; sequence SLPILQAFLN…RSKFVEKRHV (95 aa). Positions 871–1006 constitute a PAZ domain; the sequence is PLLRHVADRD…FVLEPMRISP (136 aa). 2 RNase III domains span residues 1051 to 1197 and 1248 to 1411; these read LTKD…MTTR and AQKI…VDSK. Mg(2+)-binding residues include glutamate 1288, aspartate 1397, and glutamate 1400. The DRBM domain occupies 1445–1518; sequence TFFTQYVFET…ARKALDKLRS (74 aa). Cysteine 1457, histidine 1489, cysteine 1530, and cysteine 1532 together coordinate Zn(2+).

The protein belongs to the helicase family. Dicer subfamily. It depends on Mg(2+) as a cofactor. Mn(2+) serves as cofactor.

Its function is as follows. Dicer-like endonuclease involved in cleaving double-stranded RNA in the RNA interference (RNAi) pathway. Produces 21 to 25 bp dsRNAs (siRNAs) which target the selective destruction of homologous RNAs leading to sequence-specific suppression of gene expression, called post-transcriptional gene silencing (PTGS). Part of a broad host defense response against viral infection and transposons. The sequence is that of Dicer-like protein 1 (DCL-1) from Cryphonectria parasitica (Chestnut blight fungus).